Here is a 478-residue protein sequence, read N- to C-terminus: Proton-coupled amino acid transporter 2 (478 aa).

Polar residues-rich tracts occupy residues 1-14 (MSVT…QVAT) and 26-37 (KLQSQDPSPANG). The tract at residues 1–46 (MSVTKSARSPQVATPLNLDLPESAKKLQSQDPSPANGSSSESSKKT) is disordered. Topologically, residues 1–53 (MSVTKSARSPQVATPLNLDLPESAKKLQSQDPSPANGSSSESSKKTKGITGFQ) are cytoplasmic. A helical transmembrane segment spans residues 54–74 (TLVHLVKGNMGTGILGLPLAV). At 75-76 (KN) the chain is on the extracellular side. The helical transmembrane segment at 77–97 (AGILMGPLSLLVMGLIACHCM) threads the bilayer. The Cytoplasmic segment spans residues 98–143 (HILVRCAQRFCHRLNKPFMDYGDTVMHGLAFSPNAWLQNHAHWGRR). A helical transmembrane segment spans residues 144–164 (VVSFFLIVTQLGFCCVYIVFL). Topologically, residues 165–192 (ADNLKQVVEAVNSTTISCHKNETVVLTP) are extracellular. A helical membrane pass occupies residues 193 to 213 (TMDSRLYMLSFLPVLGLLVFV). At 214-217 (RNLR) the chain is on the cytoplasmic side. Residues 218–238 (VLTIFSLLANISMLVSLVIIA) form a helical membrane-spanning segment. Topologically, residues 239–259 (QYIIQEIPDASQLPLVASWKT) are extracellular. The helical transmembrane segment at 260-280 (YPLFFGTAIFSFESIGVVLPL) threads the bilayer. Residues 281–292 (ENKMKDARGFPT) lie on the Cytoplasmic side of the membrane. Residues 293 to 313 (ILSLGMSIITTLYIAIGALGY) form a helical membrane-spanning segment. Topologically, residues 314-340 (LRFGDDIKASITLNLPNCWLYQSVKLL) are extracellular. Residues 341-361 (YVVGILCTYALQFYVPAEIII) form a helical membrane-spanning segment. At 362–374 (PLAVSQVSKRWAL) the chain is on the cytoplasmic side. A helical transmembrane segment spans residues 375-395 (PVDLSIRLALVCLTCMLAILI). Residues 396–399 (PRLD) lie on the Extracellular side of the membrane. A helical transmembrane segment spans residues 400 to 420 (LVLSLVGSVSSSALALIIPPL). At 421 to 441 (LEVVTYYGEGISPLTVTKDAL) the chain is on the cytoplasmic side. A helical transmembrane segment spans residues 442–462 (ISILGFMGFVVGTYQALDELI). Residues 463–478 (KSGNSPALSNSTMFIQ) lie on the Extracellular side of the membrane.

The protein belongs to the amino acid/polyamine transporter 2 family. In terms of tissue distribution, expressed in spinal cord, brain, testis, lung, heart, colon, spleen, kidney and muscle. Found in neuronal cell bodies in the anterior horn, in spinal cord brain stem, cerebellum, hippocampus, hypothalamus, rhinencephalon, cerebral cortex, and olfactory bulb in the brain. Also expressed in bone and fat tissues.

Its subcellular location is the cell membrane. The protein resides in the endoplasmic reticulum membrane. The protein localises to the recycling endosome membrane. The enzyme catalyses glycine(in) + H(+)(in) = glycine(out) + H(+)(out). It carries out the reaction L-alanine(in) + H(+)(in) = L-alanine(out) + H(+)(out). It catalyses the reaction D-alanine(in) + H(+)(in) = D-alanine(out) + H(+)(out). The catalysed reaction is L-proline(out) + H(+)(out) = L-proline(in) + H(+)(in). The enzyme catalyses D-proline(out) + H(+)(out) = D-proline(in) + H(+)(in). It carries out the reaction 4-hydroxy-L-proline(in) + H(+)(in) = 4-hydroxy-L-proline(out) + H(+)(out). It catalyses the reaction L-serine(in) + H(+)(in) = L-serine(out) + H(+)(out). The catalysed reaction is D-serine(out) + H(+)(out) = D-serine(in) + H(+)(in). The enzyme catalyses beta-alanine(in) + H(+)(in) = beta-alanine(out) + H(+)(out). It carries out the reaction 4-aminobutanoate(in) + H(+)(in) = 4-aminobutanoate(out) + H(+)(out). It catalyses the reaction sarcosine(in) + H(+)(in) = sarcosine(out) + H(+)(out). The catalysed reaction is N,N-dimethylglycine(in) + H(+)(in) = N,N-dimethylglycine(out) + H(+)(out). Electrogenic proton/amino acid symporter with a high selectivity for the small side chains amino acids glycine, alanine and proline, where both L- and D-enantiomers are transported. Extension of the backbone length, as in beta-alanine and 4-aminobutanoate or methylation of the amino group, as in sarcosine and N,N-dimethylglycine, are also tolerated but decrease transport efficiency. A free carboxyl group is preferred. This Mus musculus (Mouse) protein is Proton-coupled amino acid transporter 2.